A 167-amino-acid polypeptide reads, in one-letter code: Putative pre-16S rRNA nuclease (167 aa).

The protein belongs to the YqgF nuclease family.

The protein localises to the cytoplasm. Functionally, could be a nuclease involved in processing of the 5'-end of pre-16S rRNA. The sequence is that of Putative pre-16S rRNA nuclease from Streptomyces coelicolor (strain ATCC BAA-471 / A3(2) / M145).